The primary structure comprises 174 residues: Repair DNA polymerase X (174 aa).

Residues 42–51 form an involved in ssDNA binding region; sequence REEKMLNDVD. Mg(2+) is bound by residues aspartate 49 and aspartate 51. Cysteines 81 and 86 form a disulfide. Aspartate 100 serves as a coordination point for Mg(2+).

Belongs to the DNA polymerase type-X family. It depends on Mg(2+) as a cofactor.

The protein resides in the virion. It catalyses the reaction DNA(n) + a 2'-deoxyribonucleoside 5'-triphosphate = DNA(n+1) + diphosphate. Error-prone polymerase lacking a proofreading 3'-5' exonuclease which catalyzes the gap-filling reaction during the DNA repair process. Specifically binds intermediates in the single-nucleotide base-excision repair process. Also catalyzes DNA polymerization with low nucleotide-insertion fidelity. Probably acts as a strategic DNA mutase, which gives rise to a rapid emergence of variants. Generates mismatched G-G pairs, in that case, the polymerase first binds the deoxynucleotide followed by mismatch formation. Together with the viral DNA ligase, fills the single nucleotide gaps generated by the AP endonuclease. Binds DNA with high affinity via the helix alphaE. In Ornithodoros (relapsing fever ticks), this protein is Repair DNA polymerase X.